The sequence spans 509 residues: MGKLAVAAITSLWVIPMSIIVNHIVPEPYMDEIFHVPQAQQYCNGNFRSWDPMITTPPGLYYLSLAHVASLFPGMLLMENTSQSFSEACSTSVLRSTNAVSAVLCGVLVYEIIRFLGPNLSDRKATFMALVMSLYPLHWFFTFLYYTDVASLTAVLAMYLTCLKRRYVLSALFGTLAVFIRQTNVVWMLFVACSGILDFTLDSSKQKGKQEVNQELHQSSNKKGATLRSNLRKRKSDISSDTSDPFNHGQTVPSTEDTSDLVYDIYTVISTSWNLKWRILIKFSPFIFVVVAFGIFILWNGGIVLGAKEAHVVSLHFAQIMYFSLVSALFTAPLHFSVNQLRHQFHQLHRNWSLSLILTLVALVAGFVSVHFFSLAHPYLLADNRHYPFYLWRKIINAHWLMKYILVPVYVYSWFSILTLLAKTRRQTWILVYFLATCGVLVPTPLIEFRYYTIPFYLFMLHSCVRSSSFATWLLIGTIFVSINVFTMAMFLFRPFKWSHEDGVQRFIW.

At 1–4 (MGKL) the chain is on the cytoplasmic side. Residues 5 to 25 (AVAAITSLWVIPMSIIVNHIV) traverse the membrane as a helical segment. The Lumenal segment spans residues 26-57 (PEPYMDEIFHVPQAQQYCNGNFRSWDPMITTP). Residues 58–78 (PGLYYLSLAHVASLFPGMLLM) form a helical membrane-spanning segment. Residues 79-99 (ENTSQSFSEACSTSVLRSTNA) lie on the Cytoplasmic side of the membrane. The helical transmembrane segment at 100–120 (VSAVLCGVLVYEIIRFLGPNL) threads the bilayer. The Lumenal portion of the chain corresponds to 121 to 124 (SDRK). Residues 125-145 (ATFMALVMSLYPLHWFFTFLY) form a helical membrane-spanning segment. The Cytoplasmic segment spans residues 146–170 (YTDVASLTAVLAMYLTCLKRRYVLS). A helical transmembrane segment spans residues 171 to 191 (ALFGTLAVFIRQTNVVWMLFV). The Lumenal segment spans residues 192-285 (ACSGILDFTL…KWRILIKFSP (94 aa)). Positions 210–254 (QEVNQELHQSSNKKGATLRSNLRKRKSDISSDTSDPFNHGQTVPS) are disordered. Polar residues-rich tracts occupy residues 215 to 229 (ELHQ…TLRS) and 239 to 254 (SSDT…TVPS). Residues 286–306 (FIFVVVAFGIFILWNGGIVLG) form a helical membrane-spanning segment. At 307–311 (AKEAH) the chain is on the cytoplasmic side. The helical transmembrane segment at 312–332 (VVSLHFAQIMYFSLVSALFTA) threads the bilayer. At 333-355 (PLHFSVNQLRHQFHQLHRNWSLS) the chain is on the lumenal side. The N-linked (GlcNAc...) asparagine glycan is linked to Asn-351. A helical transmembrane segment spans residues 356–376 (LILTLVALVAGFVSVHFFSLA). The Cytoplasmic segment spans residues 377–400 (HPYLLADNRHYPFYLWRKIINAHW). Residues 401 to 421 (LMKYILVPVYVYSWFSILTLL) form a helical membrane-spanning segment. At 422 to 428 (AKTRRQT) the chain is on the lumenal side. Residues 429-449 (WILVYFLATCGVLVPTPLIEF) traverse the membrane as a helical segment. Residues 450–472 (RYYTIPFYLFMLHSCVRSSSFAT) lie on the Cytoplasmic side of the membrane. The chain crosses the membrane as a helical span at residues 473-493 (WLLIGTIFVSINVFTMAMFLF). At 494-509 (RPFKWSHEDGVQRFIW) the chain is on the lumenal side.

Belongs to the ALG10 glucosyltransferase family.

The protein localises to the endoplasmic reticulum membrane. It catalyses the reaction an alpha-D-Glc-(1-&gt;3)-alpha-D-Glc-(1-&gt;3)-alpha-D-Man-(1-&gt;2)-alpha-D-Man-(1-&gt;2)-alpha-D-Man-(1-&gt;3)-[alpha-D-Man-(1-&gt;2)-alpha-D-Man-(1-&gt;3)-[alpha-D-Man-(1-&gt;2)-alpha-D-Man-(1-&gt;6)]-alpha-D-Man-(1-&gt;6)]-beta-D-Man-(1-&gt;4)-beta-D-GlcNAc-(1-&gt;4)-alpha-D-GlcNAc-diphospho-di-trans,poly-cis-dolichol + a di-trans,poly-cis-dolichyl beta-D-glucosyl phosphate = a alpha-D-Glc-(1-&gt;2)-alpha-D-Glc-(1-&gt;3)-alpha-D-Glc-(1-&gt;3)-alpha-D-Man-(1-&gt;2)-alpha-D-Man-(1-&gt;2)-alpha-D-Man-(1-&gt;3)-[alpha-D-Man-(1-&gt;2)-alpha-D-Man-(1-&gt;3)-[alpha-D-Man-(1-&gt;2)-alpha-D-Man-(1-&gt;6)]-alpha-D-Man-(1-&gt;6)]-beta-D-Man-(1-&gt;4)-beta-D-GlcNAc-(1-&gt;4)-alpha-D-GlcNAc-diphospho-di-trans,poly-cis-dolichol + a di-trans,poly-cis-dolichyl phosphate + H(+). It functions in the pathway protein modification; protein glycosylation. Its function is as follows. Dol-P-Glc:Glc(2)Man(9)GlcNAc(2)-PP-Dol alpha-1,2-glucosyltransferase that operates in the biosynthetic pathway of dolichol-linked oligosaccharides, the glycan precursors employed in protein asparagine (N)-glycosylation. The assembly of dolichol-linked oligosaccharides begins on the cytosolic side of the endoplasmic reticulum membrane and finishes in its lumen. The sequential addition of sugars to dolichol pyrophosphate produces dolichol-linked oligosaccharides containing fourteen sugars, including two GlcNAcs, nine mannoses and three glucoses. Once assembled, the oligosaccharide is transferred from the lipid to nascent proteins by oligosaccharyltransferases. In the lumen of the endoplasmic reticulum, adds the third and last glucose residue from dolichyl phosphate glucose (Dol-P-Glc) onto the lipid-linked oligosaccharide intermediate Glc(2)Man(9)GlcNAc(2)-PP-Dol to produce Glc(3)Man(9)GlcNAc(2)-PP-Dol. This chain is Dol-P-Glc:Glc(2)Man(9)GlcNAc(2)-PP-Dol alpha-1,2-glucosyltransferase, found in Arabidopsis thaliana (Mouse-ear cress).